Reading from the N-terminus, the 209-residue chain is uncharacterized protein (209 aa).

Residues 13 to 75 are a coiled coil; sequence LSAVDKQMDT…AINLAAVMTD (63 aa). The disordered stretch occupies residues 107–135; the sequence is ATPLPSSNTNNEQSMSTYSSSISGKTSET. Polar residues predominate over residues 110–119; it reads LPSSNTNNEQ. Residues 120 to 133 are compositionally biased toward low complexity; that stretch reads SMSTYSSSISGKTS.

The protein belongs to the asfivirus K205R family.

Its subcellular location is the host cytoplasm. Induces host endoplasmic reticulum stress and consequently activates autophagy and NF-kappa-B signaling pathway. In turn, may induce autophagy-mediated STING1 degradation and innate immune evasion. This is an uncharacterized protein from Ornithodoros (relapsing fever ticks).